The following is a 333-amino-acid chain: Glycerol-3-phosphate dehydrogenase [NAD(P)+] (333 aa).

NADPH-binding residues include Trp13, Lys33, and Lys108. Sn-glycerol 3-phosphate is bound by residues Lys108 and Gly138. Ser142 is a binding site for NADPH. The sn-glycerol 3-phosphate site is built by Lys193, Asp246, Ser256, Arg257, and Asn258. Lys193 acts as the Proton acceptor in catalysis. Residue Arg257 participates in NADPH binding. NADPH contacts are provided by Val281 and Glu283.

This sequence belongs to the NAD-dependent glycerol-3-phosphate dehydrogenase family.

It is found in the cytoplasm. It catalyses the reaction sn-glycerol 3-phosphate + NAD(+) = dihydroxyacetone phosphate + NADH + H(+). It carries out the reaction sn-glycerol 3-phosphate + NADP(+) = dihydroxyacetone phosphate + NADPH + H(+). It functions in the pathway membrane lipid metabolism; glycerophospholipid metabolism. Functionally, catalyzes the reduction of the glycolytic intermediate dihydroxyacetone phosphate (DHAP) to sn-glycerol 3-phosphate (G3P), the key precursor for phospholipid synthesis. This chain is Glycerol-3-phosphate dehydrogenase [NAD(P)+], found in Bifidobacterium longum subsp. infantis (strain ATCC 15697 / DSM 20088 / JCM 1222 / NCTC 11817 / S12).